Consider the following 196-residue polypeptide: MLTIGVLGLQGAVREHIRSIEACGSKGVVIKRPEQLDDIDGLILPGGESTTMRRLMDTYHFMEPLREFAAQGKPMFGTCAGLIILAKEIAGTDNAHLGLLNVVVERNSFGRQVDSFEADLTIKGLDEPFTGVFIRAPHILEAGEDVEVLCEHNGRIVAAKQGNFLGCSFHPELTDDHRVTELFVKMAEKHKQETAV.

Position 47–49 (47–49) interacts with L-glutamine; it reads GES. Cysteine 79 (nucleophile) is an active-site residue. L-glutamine contacts are provided by residues arginine 106 and 134 to 135; that span reads IR. Residues histidine 170 and glutamate 172 each act as charge relay system in the active site.

This sequence belongs to the glutaminase PdxT/SNO family. In terms of assembly, in the presence of PdxS, forms a dodecamer of heterodimers. Only shows activity in the heterodimer.

It carries out the reaction aldehydo-D-ribose 5-phosphate + D-glyceraldehyde 3-phosphate + L-glutamine = pyridoxal 5'-phosphate + L-glutamate + phosphate + 3 H2O + H(+). It catalyses the reaction L-glutamine + H2O = L-glutamate + NH4(+). The protein operates within cofactor biosynthesis; pyridoxal 5'-phosphate biosynthesis. In terms of biological role, catalyzes the hydrolysis of glutamine to glutamate and ammonia as part of the biosynthesis of pyridoxal 5'-phosphate. The resulting ammonia molecule is channeled to the active site of PdxS. This is Pyridoxal 5'-phosphate synthase subunit PdxT from Bacillus velezensis (strain DSM 23117 / BGSC 10A6 / LMG 26770 / FZB42) (Bacillus amyloliquefaciens subsp. plantarum).